The primary structure comprises 337 residues: Lipoyl synthase (337 aa).

Positions 81, 86, 92, 107, 111, 114, and 323 each coordinate [4Fe-4S] cluster. Residues Phe93 to Ser312 form the Radical SAM core domain.

This sequence belongs to the radical SAM superfamily. Lipoyl synthase family. [4Fe-4S] cluster serves as cofactor.

It localises to the cytoplasm. It catalyses the reaction [[Fe-S] cluster scaffold protein carrying a second [4Fe-4S](2+) cluster] + N(6)-octanoyl-L-lysyl-[protein] + 2 oxidized [2Fe-2S]-[ferredoxin] + 2 S-adenosyl-L-methionine + 4 H(+) = [[Fe-S] cluster scaffold protein] + N(6)-[(R)-dihydrolipoyl]-L-lysyl-[protein] + 4 Fe(3+) + 2 hydrogen sulfide + 2 5'-deoxyadenosine + 2 L-methionine + 2 reduced [2Fe-2S]-[ferredoxin]. The protein operates within protein modification; protein lipoylation via endogenous pathway; protein N(6)-(lipoyl)lysine from octanoyl-[acyl-carrier-protein]: step 2/2. Catalyzes the radical-mediated insertion of two sulfur atoms into the C-6 and C-8 positions of the octanoyl moiety bound to the lipoyl domains of lipoate-dependent enzymes, thereby converting the octanoylated domains into lipoylated derivatives. The polypeptide is Lipoyl synthase (Xanthomonas oryzae pv. oryzae (strain MAFF 311018)).